A 148-amino-acid chain; its full sequence is MPGGDTTPEEAAAPSCAGYNPGLLLFRAQKAQGACVTSTEGAWPRRASALYGGRKMRCGESGAGPDPRSNSAEVSSSQPALASKSQSKWGPTSNNPRGALTTTEFEMAGNRSQNIKHKQTALIAIPMSSQTPRMLGRPRNQGQLYPQP.

The interval 55–148 is disordered; that stretch reads KMRCGESGAG…RNQGQLYPQP (94 aa). The segment covering 68 to 104 has biased composition (polar residues); the sequence is RSNSAEVSSSQPALASKSQSKWGPTSNNPRGALTTTE.

This is an uncharacterized protein from Homo sapiens (Human).